The chain runs to 430 residues: MGKNVVVLGTQWGDEGKGKIVDLLTEHATAVVRYQGGHNAGHTLVIDGEKTVLHLIPSGVLREGVQCLIGNGVVVAPDALLREIVKLEEKGIPVRERLRISPSCPLILSYHVALDQAREKARGEFKIGTTGRGIGPAYEDKVARRGLRIGDLFHRERFAAKLGELLDYHNFVLVNYYKEPAIDFQKTLDECMEYADMLKPLMLDVTAALHEMRRDGKDIMFEGAQGSLLDIDHGTYPYVTSSNTTAGGIATGSGFGPMYLDYILGITKAYTTRVGSGPFPTELFDDVGAFLAKRGHEFGATTGRARRCGWFDAVILRRAIEINSISGLCLTKLDVLDGLETINICVGYENEEGAVIDAPTDADSYLGLRPVYEQMPGWSESTLGAKTLEELPAAARAYIKRVEELVGAPIDIISTGPDRNETIVLRHPFG.

GTP contacts are provided by residues 13 to 19 (GDEGKGK) and 41 to 43 (GHT). D14 acts as the Proton acceptor in catalysis. Positions 14 and 41 each coordinate Mg(2+). Residues 14-17 (DEGK), 39-42 (NAGH), T130, R144, Q225, T240, and R304 contribute to the IMP site. Catalysis depends on H42, which acts as the Proton donor. Position 300-306 (300-306 (ATTGRAR)) interacts with substrate. Residues R306, 332–334 (KLD), and 414–416 (STG) contribute to the GTP site.

It belongs to the adenylosuccinate synthetase family. As to quaternary structure, homodimer. Mg(2+) is required as a cofactor.

It is found in the cytoplasm. The enzyme catalyses IMP + L-aspartate + GTP = N(6)-(1,2-dicarboxyethyl)-AMP + GDP + phosphate + 2 H(+). It functions in the pathway purine metabolism; AMP biosynthesis via de novo pathway; AMP from IMP: step 1/2. In terms of biological role, plays an important role in the de novo pathway of purine nucleotide biosynthesis. Catalyzes the first committed step in the biosynthesis of AMP from IMP. The polypeptide is Adenylosuccinate synthetase (Pseudomonas syringae pv. syringae (strain B728a)).